Reading from the N-terminus, the 502-residue chain is uncharacterized protein (502 aa).

A helical transmembrane segment spans residues 1-21; it reads MKIFLVFLSVFFFNGCFGLVY. PLD phosphodiesterase domains lie at 162 to 189 and 396 to 423; these read IKKRMHNKLFIVDNFAVIIGGRNIGDNY and TKHSLHGKTIVFDDNLTLLGSFNIDPRS.

The protein belongs to the phospholipase D family. Cardiolipin synthase subfamily.

Its subcellular location is the cell membrane. This is an uncharacterized protein from Helicobacter pylori (strain ATCC 700392 / 26695) (Campylobacter pylori).